The chain runs to 389 residues: 1-deoxy-D-xylulose 5-phosphate reductoisomerase (389 aa).

Positions 11, 12, 13, 14, 39, and 122 each coordinate NADPH. Residue lysine 123 coordinates 1-deoxy-D-xylulose 5-phosphate. An NADPH-binding site is contributed by glutamate 124. Aspartate 148 provides a ligand contact to Mn(2+). Residues serine 149, glutamate 150, serine 174, and histidine 197 each contribute to the 1-deoxy-D-xylulose 5-phosphate site. Glutamate 150 is a binding site for Mn(2+). Residue glycine 203 participates in NADPH binding. 1-deoxy-D-xylulose 5-phosphate-binding residues include serine 210, asparagine 215, lysine 216, and glutamate 219. Glutamate 219 lines the Mn(2+) pocket.

It belongs to the DXR family. Mg(2+) is required as a cofactor. The cofactor is Mn(2+).

It catalyses the reaction 2-C-methyl-D-erythritol 4-phosphate + NADP(+) = 1-deoxy-D-xylulose 5-phosphate + NADPH + H(+). It participates in isoprenoid biosynthesis; isopentenyl diphosphate biosynthesis via DXP pathway; isopentenyl diphosphate from 1-deoxy-D-xylulose 5-phosphate: step 1/6. In terms of biological role, catalyzes the NADPH-dependent rearrangement and reduction of 1-deoxy-D-xylulose-5-phosphate (DXP) to 2-C-methyl-D-erythritol 4-phosphate (MEP). This Leptospira interrogans serogroup Icterohaemorrhagiae serovar Lai (strain 56601) protein is 1-deoxy-D-xylulose 5-phosphate reductoisomerase.